A 168-amino-acid chain; its full sequence is DOMON domain-containing protein Y73F4A.2 (168 aa).

The N-terminal stretch at 1–18 is a signal peptide; sequence MFRSIAVLSALLFAFASA. Positions 26–143 constitute a DOMON domain; the sequence is SDFEVYWRFA…CQKWRFVKSG (118 aa). N36 carries N-linked (GlcNAc...) asparagine glycosylation. A disordered region spans residues 148 to 168; the sequence is GQLTRNDKSPKEKKVCPMECN. Residues 152 to 168 are compositionally biased toward basic and acidic residues; that stretch reads RNDKSPKEKKVCPMECN.

It is found in the secreted. This Caenorhabditis elegans protein is DOMON domain-containing protein Y73F4A.2.